Consider the following 822-residue polypeptide: IQ and AAA domain-containing protein 1-like (822 aa).

An IQ domain is found at 206-235 (QDQGAIVIQKVWKGYLQRKRIEQDRRMEME). Residues 338 to 363 (RQELEAQAQENKKKEQEKNKDKVKEK) are compositionally biased toward basic and acidic residues. Disordered regions lie at residues 338–378 (RQEL…KAKK) and 457–484 (REETRPLKSPKKKGGKKSGKKKKEKDLT). Over residues 464 to 479 (KSPKKKGGKKSGKKKK) the composition is skewed to basic residues. 569–576 (GPSGMGKK) contributes to the ATP binding site.

This sequence belongs to the AAA ATPase family.

This Rattus norvegicus (Rat) protein is IQ and AAA domain-containing protein 1-like (Iqca1l).